Here is a 472-residue protein sequence, read N- to C-terminus: ATP synthase subunit beta (472 aa).

155 to 162 (GGAGVGKT) contributes to the ATP binding site.

Belongs to the ATPase alpha/beta chains family. In terms of assembly, F-type ATPases have 2 components, CF(1) - the catalytic core - and CF(0) - the membrane proton channel. CF(1) has five subunits: alpha(3), beta(3), gamma(1), delta(1), epsilon(1). CF(0) has three main subunits: a(1), b(2) and c(9-12). The alpha and beta chains form an alternating ring which encloses part of the gamma chain. CF(1) is attached to CF(0) by a central stalk formed by the gamma and epsilon chains, while a peripheral stalk is formed by the delta and b chains.

The protein localises to the cell membrane. The catalysed reaction is ATP + H2O + 4 H(+)(in) = ADP + phosphate + 5 H(+)(out). In terms of biological role, produces ATP from ADP in the presence of a proton gradient across the membrane. The catalytic sites are hosted primarily by the beta subunits. In Fervidobacterium islandicum, this protein is ATP synthase subunit beta.